The chain runs to 270 residues: Formamidopyrimidine-DNA glycosylase (270 aa).

The Schiff-base intermediate with DNA role is filled by Pro-2. The active-site Proton donor is Glu-3. The active-site Proton donor; for beta-elimination activity is the Lys-58. Positions 91, 110, and 151 each coordinate DNA. The FPG-type zinc finger occupies 236-270 (RVYDREDAPCRRCATPIRRIVQAQRASFYCPTCQR). Catalysis depends on Arg-260, which acts as the Proton donor; for delta-elimination activity.

It belongs to the FPG family. As to quaternary structure, monomer. Zn(2+) serves as cofactor.

The enzyme catalyses Hydrolysis of DNA containing ring-opened 7-methylguanine residues, releasing 2,6-diamino-4-hydroxy-5-(N-methyl)formamidopyrimidine.. The catalysed reaction is 2'-deoxyribonucleotide-(2'-deoxyribose 5'-phosphate)-2'-deoxyribonucleotide-DNA = a 3'-end 2'-deoxyribonucleotide-(2,3-dehydro-2,3-deoxyribose 5'-phosphate)-DNA + a 5'-end 5'-phospho-2'-deoxyribonucleoside-DNA + H(+). Involved in base excision repair of DNA damaged by oxidation or by mutagenic agents. Acts as a DNA glycosylase that recognizes and removes damaged bases. Has a preference for oxidized purines, such as 7,8-dihydro-8-oxoguanine (8-oxoG). Has AP (apurinic/apyrimidinic) lyase activity and introduces nicks in the DNA strand. Cleaves the DNA backbone by beta-delta elimination to generate a single-strand break at the site of the removed base with both 3'- and 5'-phosphates. This chain is Formamidopyrimidine-DNA glycosylase, found in Thiobacillus denitrificans (strain ATCC 25259 / T1).